We begin with the raw amino-acid sequence, 372 residues long: tRNA-specific 2-thiouridylase MnmA (372 aa).

ATP is bound by residues 11-18 (GLSGGVDS) and Met36. Residues 106 to 108 (NPD) are interaction with target base in tRNA. Cys111 serves as the catalytic Nucleophile. The cysteines at positions 111 and 204 are disulfide-linked. Gly136 contributes to the ATP binding site. The segment at 154–156 (KDQ) is interaction with tRNA. Cys204 (cysteine persulfide intermediate) is an active-site residue. The tract at residues 311–312 (RY) is interaction with tRNA.

This sequence belongs to the MnmA/TRMU family.

It is found in the cytoplasm. The catalysed reaction is S-sulfanyl-L-cysteinyl-[protein] + uridine(34) in tRNA + AH2 + ATP = 2-thiouridine(34) in tRNA + L-cysteinyl-[protein] + A + AMP + diphosphate + H(+). Its function is as follows. Catalyzes the 2-thiolation of uridine at the wobble position (U34) of tRNA, leading to the formation of s(2)U34. The protein is tRNA-specific 2-thiouridylase MnmA of Mycoplasmopsis synoviae (strain 53) (Mycoplasma synoviae).